The sequence spans 150 residues: SsrA-binding protein (150 aa).

This sequence belongs to the SmpB family.

Its subcellular location is the cytoplasm. In terms of biological role, required for rescue of stalled ribosomes mediated by trans-translation. Binds to transfer-messenger RNA (tmRNA), required for stable association of tmRNA with ribosomes. tmRNA and SmpB together mimic tRNA shape, replacing the anticodon stem-loop with SmpB. tmRNA is encoded by the ssrA gene; the 2 termini fold to resemble tRNA(Ala) and it encodes a 'tag peptide', a short internal open reading frame. During trans-translation Ala-aminoacylated tmRNA acts like a tRNA, entering the A-site of stalled ribosomes, displacing the stalled mRNA. The ribosome then switches to translate the ORF on the tmRNA; the nascent peptide is terminated with the 'tag peptide' encoded by the tmRNA and targeted for degradation. The ribosome is freed to recommence translation, which seems to be the essential function of trans-translation. The polypeptide is SsrA-binding protein (Coprothermobacter proteolyticus (strain ATCC 35245 / DSM 5265 / OCM 4 / BT)).